The primary structure comprises 199 residues: Cytochrome c oxidase subunit 2 (199 aa).

The helical transmembrane segment at 1-13 threads the bilayer; sequence AICSLVLYLLTLM. Topologically, residues 14 to 26 are mitochondrial matrix; it reads LMEKLSSNTVDAQ. A helical transmembrane segment spans residues 27–54; the sequence is EVELIWTILPAIVLILLALPSLQILYMM. Topologically, residues 55 to 199 are mitochondrial intermembrane; sequence DEIDEPDLTL…SSLLSASSSL (145 aa). Positions 128, 163, 165, 167, 171, and 174 each coordinate Cu cation. A Mg(2+)-binding site is contributed by glutamate 165.

Belongs to the cytochrome c oxidase subunit 2 family. In terms of assembly, component of the cytochrome c oxidase (complex IV, CIV), a multisubunit enzyme composed of 14 subunits. The complex is composed of a catalytic core of 3 subunits MT-CO1, MT-CO2 and MT-CO3, encoded in the mitochondrial DNA, and 11 supernumerary subunits COX4I, COX5A, COX5B, COX6A, COX6B, COX6C, COX7A, COX7B, COX7C, COX8 and NDUFA4, which are encoded in the nuclear genome. The complex exists as a monomer or a dimer and forms supercomplexes (SCs) in the inner mitochondrial membrane with NADH-ubiquinone oxidoreductase (complex I, CI) and ubiquinol-cytochrome c oxidoreductase (cytochrome b-c1 complex, complex III, CIII), resulting in different assemblies (supercomplex SCI(1)III(2)IV(1) and megacomplex MCI(2)III(2)IV(2)). Found in a complex with TMEM177, COA6, COX18, COX20, SCO1 and SCO2. Interacts with TMEM177 in a COX20-dependent manner. Interacts with COX20. Interacts with COX16. The cofactor is Cu cation.

The protein resides in the mitochondrion inner membrane. It carries out the reaction 4 Fe(II)-[cytochrome c] + O2 + 8 H(+)(in) = 4 Fe(III)-[cytochrome c] + 2 H2O + 4 H(+)(out). Component of the cytochrome c oxidase, the last enzyme in the mitochondrial electron transport chain which drives oxidative phosphorylation. The respiratory chain contains 3 multisubunit complexes succinate dehydrogenase (complex II, CII), ubiquinol-cytochrome c oxidoreductase (cytochrome b-c1 complex, complex III, CIII) and cytochrome c oxidase (complex IV, CIV), that cooperate to transfer electrons derived from NADH and succinate to molecular oxygen, creating an electrochemical gradient over the inner membrane that drives transmembrane transport and the ATP synthase. Cytochrome c oxidase is the component of the respiratory chain that catalyzes the reduction of oxygen to water. Electrons originating from reduced cytochrome c in the intermembrane space (IMS) are transferred via the dinuclear copper A center (CU(A)) of subunit 2 and heme A of subunit 1 to the active site in subunit 1, a binuclear center (BNC) formed by heme A3 and copper B (CU(B)). The BNC reduces molecular oxygen to 2 water molecules using 4 electrons from cytochrome c in the IMS and 4 protons from the mitochondrial matrix. This Dromaius novaehollandiae (Emu) protein is Cytochrome c oxidase subunit 2 (MT-CO2).